We begin with the raw amino-acid sequence, 186 residues long: Elongation factor P (186 aa).

It belongs to the elongation factor P family.

The protein resides in the cytoplasm. Its pathway is protein biosynthesis; polypeptide chain elongation. Its function is as follows. Involved in peptide bond synthesis. Stimulates efficient translation and peptide-bond synthesis on native or reconstituted 70S ribosomes in vitro. Probably functions indirectly by altering the affinity of the ribosome for aminoacyl-tRNA, thus increasing their reactivity as acceptors for peptidyl transferase. The chain is Elongation factor P from Streptococcus pneumoniae (strain Hungary19A-6).